The primary structure comprises 200 residues: Crossover junction endodeoxyribonuclease RuvC (200 aa).

Residues Asp18, Glu78, and Asp151 contribute to the active site. Mg(2+)-binding residues include Asp18, Glu78, and Asp151.

It belongs to the RuvC family. As to quaternary structure, homodimer which binds Holliday junction (HJ) DNA. The HJ becomes 2-fold symmetrical on binding to RuvC with unstacked arms; it has a different conformation from HJ DNA in complex with RuvA. In the full resolvosome a probable DNA-RuvA(4)-RuvB(12)-RuvC(2) complex forms which resolves the HJ. Mg(2+) serves as cofactor.

The protein localises to the cytoplasm. It catalyses the reaction Endonucleolytic cleavage at a junction such as a reciprocal single-stranded crossover between two homologous DNA duplexes (Holliday junction).. The RuvA-RuvB-RuvC complex processes Holliday junction (HJ) DNA during genetic recombination and DNA repair. Endonuclease that resolves HJ intermediates. Cleaves cruciform DNA by making single-stranded nicks across the HJ at symmetrical positions within the homologous arms, yielding a 5'-phosphate and a 3'-hydroxyl group; requires a central core of homology in the junction. The consensus cleavage sequence is 5'-(A/T)TT(C/G)-3'. Cleavage occurs on the 3'-side of the TT dinucleotide at the point of strand exchange. HJ branch migration catalyzed by RuvA-RuvB allows RuvC to scan DNA until it finds its consensus sequence, where it cleaves and resolves the cruciform DNA. This is Crossover junction endodeoxyribonuclease RuvC from Cytophaga hutchinsonii (strain ATCC 33406 / DSM 1761 / CIP 103989 / NBRC 15051 / NCIMB 9469 / D465).